A 576-amino-acid chain; its full sequence is Arginine--tRNA ligase (576 aa).

Residues 126–136 (ANPTGPMHIGH) carry the 'HIGH' region motif.

It belongs to the class-I aminoacyl-tRNA synthetase family. In terms of assembly, monomer.

The protein localises to the cytoplasm. It catalyses the reaction tRNA(Arg) + L-arginine + ATP = L-arginyl-tRNA(Arg) + AMP + diphosphate. This chain is Arginine--tRNA ligase, found in Rickettsia peacockii (strain Rustic).